A 90-amino-acid chain; its full sequence is Hemoglobin subunit alpha-1 (90 aa).

Residues 1–90 (VLTDDDKNHV…SKLSDLHAEK (90 aa)) enclose the Globin domain.

This sequence belongs to the globin family. In terms of assembly, heterotetramer of two alpha chains and two beta chains. As to expression, red blood cells.

Involved in oxygen transport from the lung to the various peripheral tissues. The polypeptide is Hemoglobin subunit alpha-1 (Saara hardwickii (Indian spiny-tailed lizard)).